Here is a 217-residue protein sequence, read N- to C-terminus: Putative cobalt transport protein CbiM (217 aa).

Helical transmembrane passes span 8-28, 44-64, 74-94, 107-127, 139-161, and 181-201; these read LPPE…VYGA, LIAV…PSVT, GIAV…IVLL, TLGA…WIAF, VFAA…LALA, and IFAV…VMLV.

It belongs to the CbiM family. In terms of assembly, forms an energy-coupling factor (ECF) transporter complex composed of an ATP-binding protein (A component, CbiO), a transmembrane protein (T component, CbiQ) and 2 possible substrate-capture proteins (S components, CbiM and CbiN) of unknown stoichimetry.

The protein resides in the cell membrane. Its pathway is cofactor biosynthesis; adenosylcobalamin biosynthesis. Its function is as follows. Part of the energy-coupling factor (ECF) transporter complex CbiMNOQ involved in cobalt import. This is Putative cobalt transport protein CbiM from Archaeoglobus fulgidus (strain ATCC 49558 / DSM 4304 / JCM 9628 / NBRC 100126 / VC-16).